Consider the following 309-residue polypeptide: Taste receptor type 2 member 31 (309 aa).

Residues 1 to 2 (MI) lie on the Extracellular side of the membrane. The helical transmembrane segment at 3–23 (TFLPIIFSILVVVTFVIGNFA) threads the bilayer. Topologically, residues 24–55 (NGFIALVNSTEWVKRQKISFADQILTALAVSR) are cytoplasmic. A helical transmembrane segment spans residues 56–76 (VGLLWVLLLNWYATVLNPAFY). Residues 77 to 100 (SVEVRTTTYNVWAVTNHFSNWLAT) lie on the Extracellular side of the membrane. A helical transmembrane segment spans residues 101–121 (SLSIFYLLKIANFSNLIFLHL). Over 122–126 (KRRVK) the chain is Cytoplasmic. A helical transmembrane segment spans residues 127 to 147 (NVILVMLLGPLLILACHLFMV). At 148 to 181 (NMNEIVRTKEYEENMTWKYILRNAIYHPGMTVTT) the chain is on the extracellular side. N-linked (GlcNAc...) asparagine glycosylation is present at asparagine 161. A helical membrane pass occupies residues 182 to 202 (LQNLVPFTLTLISFLLLICSL). The Cytoplasmic segment spans residues 203–229 (CKHLKKMQLHGKGPQDPSTKVHIKALQ). Residues 230–250 (IVISFLLLCVIYFVSVIISIW) form a helical membrane-spanning segment. Residues 251-259 (SFESLGNKP) are Extracellular-facing. A helical transmembrane segment spans residues 260–280 (VFMFCQAIRFSYPSAHPFIVI). The Cytoplasmic portion of the chain corresponds to 281–309 (WGNKKLKQTFLSVLWNVRYWVKGQKPSSL).

Belongs to the G-protein coupled receptor T2R family.

Its subcellular location is the membrane. In terms of biological role, receptor that may play a role in the perception of bitterness and is gustducin-linked. May play a role in sensing the chemical composition of the gastrointestinal content. The activity of this receptor may stimulate alpha gustducin, mediate PLC-beta-2 activation and lead to the gating of TRPM5. In Papio hamadryas (Hamadryas baboon), this protein is Taste receptor type 2 member 31 (TAS2R31).